Consider the following 343-residue polypeptide: Anthranilate phosphoribosyltransferase (343 aa).

5-phospho-alpha-D-ribose 1-diphosphate contacts are provided by residues G84, 87 to 88 (GD), T92, 94 to 97 (NIST), 112 to 120 (KHGNRGVSS), and S124. G84 provides a ligand contact to anthranilate. Residue S96 coordinates Mg(2+). N115 serves as a coordination point for anthranilate. Anthranilate is bound at residue R170. The Mg(2+) site is built by D229 and E230.

Belongs to the anthranilate phosphoribosyltransferase family. In terms of assembly, homodimer. Requires Mg(2+) as cofactor.

The enzyme catalyses N-(5-phospho-beta-D-ribosyl)anthranilate + diphosphate = 5-phospho-alpha-D-ribose 1-diphosphate + anthranilate. It participates in amino-acid biosynthesis; L-tryptophan biosynthesis; L-tryptophan from chorismate: step 2/5. Its function is as follows. Catalyzes the transfer of the phosphoribosyl group of 5-phosphorylribose-1-pyrophosphate (PRPP) to anthranilate to yield N-(5'-phosphoribosyl)-anthranilate (PRA). The sequence is that of Anthranilate phosphoribosyltransferase from Burkholderia pseudomallei (strain 1106a).